Reading from the N-terminus, the 305-residue chain is tRNA pseudouridine synthase B (305 aa).

Aspartate 39 acts as the Nucleophile in catalysis.

This sequence belongs to the pseudouridine synthase TruB family. Type 1 subfamily.

It carries out the reaction uridine(55) in tRNA = pseudouridine(55) in tRNA. Its function is as follows. Responsible for synthesis of pseudouridine from uracil-55 in the psi GC loop of transfer RNAs. The sequence is that of tRNA pseudouridine synthase B from Staphylococcus aureus (strain MRSA252).